Reading from the N-terminus, the 305-residue chain is Nucleotide-binding protein Mpe_A3336 (305 aa).

Residue 22–29 (GISGSGKS) participates in ATP binding. Position 74 to 77 (74 to 77 (DVRS)) interacts with GTP.

It belongs to the RapZ-like family.

Functionally, displays ATPase and GTPase activities. The chain is Nucleotide-binding protein Mpe_A3336 from Methylibium petroleiphilum (strain ATCC BAA-1232 / LMG 22953 / PM1).